An 82-amino-acid chain; its full sequence is Sec-independent protein translocase protein TatA (82 aa).

A helical transmembrane segment spans residues 1–21 (MGGISIWQLLIIAVIIVLLFG). A disordered region spans residues 48-82 (SAKDAKKDADFVPQNLEKKEAETVEKQKQNDKEQA).

It belongs to the TatA/E family. As to quaternary structure, the Tat system comprises two distinct complexes: a TatABC complex, containing multiple copies of TatA, TatB and TatC subunits, and a separate TatA complex, containing only TatA subunits. Substrates initially bind to the TatABC complex, which probably triggers association of the separate TatA complex to form the active translocon.

The protein localises to the cell inner membrane. Functionally, part of the twin-arginine translocation (Tat) system that transports large folded proteins containing a characteristic twin-arginine motif in their signal peptide across membranes. TatA could form the protein-conducting channel of the Tat system. The protein is Sec-independent protein translocase protein TatA of Aliivibrio salmonicida (strain LFI1238) (Vibrio salmonicida (strain LFI1238)).